Reading from the N-terminus, the 323-residue chain is tRNA dimethylallyltransferase (323 aa).

15-22 (GATGSGKT) contributes to the ATP binding site. 17–22 (TGSGKT) contributes to the substrate binding site. 2 interaction with substrate tRNA regions span residues 40 to 43 (DSRQ) and 164 to 168 (QRLIR).

It belongs to the IPP transferase family. Monomer. Requires Mg(2+) as cofactor.

It carries out the reaction adenosine(37) in tRNA + dimethylallyl diphosphate = N(6)-dimethylallyladenosine(37) in tRNA + diphosphate. Catalyzes the transfer of a dimethylallyl group onto the adenine at position 37 in tRNAs that read codons beginning with uridine, leading to the formation of N6-(dimethylallyl)adenosine (i(6)A). The protein is tRNA dimethylallyltransferase of Chloroherpeton thalassium (strain ATCC 35110 / GB-78).